A 196-amino-acid chain; its full sequence is Charged multivesicular body protein 1a (196 aa).

Met1 bears the N-acetylmethionine mark. Positions 5–47 form a coiled coil; the sequence is LFQLKFTAKQLEKLAKKAEKDSKAEQAKVKKALLQKNVECARV. Ser101 carries the post-translational modification Phosphoserine. Residues 102-124 are a coiled coil; that stretch reads TMDLQKVSSVMDRFEQQVQNLDV. At Ser173 the chain carries Phosphoserine. The disordered stretch occupies residues 173–196; it reads SAVGESSVRSQEDQLSRRLAALRN. An MIT-interacting motif motif is present at residues 185–195; it reads DQLSRRLAALR.

This sequence belongs to the SNF7 family. As to quaternary structure, probable peripherally associated component of the endosomal sorting required for transport complex III (ESCRT-III). ESCRT-III components are thought to multimerize to form a flat lattice on the perimeter membrane of the endosome. Several assembly forms of ESCRT-III may exist that interact and act sequentially. Self-associates. Interacts with CHMP1B. Interacts with VPS4A. Interacts with VPS4B. Interacts with PHF1. Interacts with IST1. Interacts with MITD1. As to expression, expressed in placenta, cultured skin fibroblasts and in osteoblast cell line MG-63.

The protein resides in the cytoplasm. Its subcellular location is the endosome membrane. The protein localises to the nucleus matrix. In terms of biological role, probable peripherally associated component of the endosomal sorting required for transport complex III (ESCRT-III) which is involved in multivesicular bodies (MVBs) formation and sorting of endosomal cargo proteins into MVBs. MVBs contain intraluminal vesicles (ILVs) that are generated by invagination and scission from the limiting membrane of the endosome and mostly are delivered to lysosomes enabling degradation of membrane proteins, such as stimulated growth factor receptors, lysosomal enzymes and lipids. The MVB pathway appears to require the sequential function of ESCRT-O, -I,-II and -III complexes. ESCRT-III proteins mostly dissociate from the invaginating membrane before the ILV is released. The ESCRT machinery also functions in topologically equivalent membrane fission events, such as the terminal stages of cytokinesis and the budding of enveloped viruses (HIV-1 and other lentiviruses). ESCRT-III proteins are believed to mediate the necessary vesicle extrusion and/or membrane fission activities, possibly in conjunction with the AAA ATPase VPS4. Involved in cytokinesis. Involved in recruiting VPS4A and/or VPS4B to the midbody of dividing cells. May also be involved in chromosome condensation. Targets the Polycomb group (PcG) protein BMI1/PCGF4 to regions of condensed chromatin. May play a role in stable cell cycle progression and in PcG gene silencing. This is Charged multivesicular body protein 1a (CHMP1A) from Homo sapiens (Human).